The sequence spans 313 residues: 2,3-dihydroxyphenylpropionate/2,3-dihydroxicinnamic acid 1,2-dioxygenase (313 aa).

His-115 functions as the Proton donor in the catalytic mechanism. His-179 functions as the Proton acceptor in the catalytic mechanism.

It belongs to the LigB/MhpB extradiol dioxygenase family. In terms of assembly, homotetramer. Fe(2+) serves as cofactor.

It catalyses the reaction 3-(2,3-dihydroxyphenyl)propanoate + O2 = (2Z,4E)-2-hydroxy-6-oxonona-2,4-dienedioate + H(+). The catalysed reaction is (2E)-3-(2,3-dihydroxyphenyl)prop-2-enoate + O2 = (2Z,4E,7E)-2-hydroxy-6-oxonona-2,4,7-trienedioate + H(+). The protein operates within aromatic compound metabolism; 3-phenylpropanoate degradation. Functionally, catalyzes the non-heme iron(II)-dependent oxidative cleavage of 2,3-dihydroxyphenylpropionic acid and 2,3-dihydroxicinnamic acid into 2-hydroxy-6-ketononadienedioate and 2-hydroxy-6-ketononatrienedioate, respectively. This is 2,3-dihydroxyphenylpropionate/2,3-dihydroxicinnamic acid 1,2-dioxygenase from Mycobacterium ulcerans (strain Agy99).